The chain runs to 295 residues: Glycine N-acyltransferase-like protein Keg1 (295 aa).

The residue at position 41 (Lys-41) is an N6-acetyllysine; alternate. Lys-41 is modified (N6-succinyllysine; alternate). Lys-43 is subject to N6-acetyllysine. Lys-48 carries the N6-acetyllysine; alternate modification. Lys-48 is modified (N6-succinyllysine; alternate). N6-acetyllysine is present on residues Lys-80 and Lys-83. An N6-acetyllysine; alternate mark is found at Lys-124, Lys-128, and Lys-140. Lys-124, Lys-128, and Lys-140 each carry N6-succinyllysine; alternate. Lys-150 is modified (N6-acetyllysine). Residue Lys-255 is modified to N6-acetyllysine; alternate. Position 255 is an N6-succinyllysine; alternate (Lys-255).

Belongs to the glycine N-acyltransferase family. As to quaternary structure, binds to microtubules. As to expression, specifically expressed in kidney and liver. Up-regulated in the regenerating liver as well as in hepatocellular carcinoma.

The protein localises to the cytoplasm. Its subcellular location is the cytoskeleton. The protein resides in the microtubule organizing center. It is found in the centrosome. The catalysed reaction is an acyl-CoA + glycine = an N-acylglycine + CoA + H(+). Its function is as follows. Acyltransferase which transfers the acyl group to the N-terminus of glycine. Can conjugate a multitude of substrates to form a variety of N-acylglycines. The chain is Glycine N-acyltransferase-like protein Keg1 (Keg1) from Rattus norvegicus (Rat).